Consider the following 266-residue polypeptide: 15-hydroxyprostaglandin dehydrogenase [NAD(+)] (266 aa).

Residues 12-20, 36-37, 63-65, and Asn91 contribute to the NAD(+) site; these read GAAQGIGRA, DW, and CDV. 2 residues coordinate substrate: Ser138 and Gln148. Tyr151 (proton acceptor) is an active-site residue. Residues 151–155 and 186–188 each bind NAD(+); these read YCASK and VDT.

The protein belongs to the short-chain dehydrogenases/reductases (SDR) family. As to quaternary structure, homodimer.

The protein localises to the cytoplasm. It carries out the reaction prostaglandin E2 + NAD(+) = 15-oxoprostaglandin E2 + NADH + H(+). It catalyses the reaction (15S)-hydroxy-(5Z,8Z,11Z,13E)-eicosatetraenoate + NAD(+) = 15-oxo-(5Z,8Z,11Z,13E)-eicosatetraenoate + NADH + H(+). The enzyme catalyses (11R)-hydroxy-(5Z,8Z,12E,14Z)-eicosatetraenoate + NAD(+) = 11-oxo-(5Z,8Z,12E,14Z)-eicosatetraenoate + NADH + H(+). The catalysed reaction is lipoxin A4 + NAD(+) = 15-oxo-(5S,6R)-dihydroxy-(7E,9E,11Z,13E)-eicosatetraenoate + NADH + H(+). It carries out the reaction 15-oxo-(5S,6R)-dihydroxy-(7E,9E,11Z)-eicosatrienoate + NADH + H(+) = (5S,6R,15S)-trihydroxy-(7E,9E,11Z)-eicosatrienoate + NAD(+). It catalyses the reaction prostaglandin A1 + NAD(+) = 15-oxo-prostaglandin A1 + NADH + H(+). The enzyme catalyses prostaglandin E1 + NAD(+) = 15-oxoprostaglandin E1 + NADH + H(+). The catalysed reaction is 14-hydroxy-(4Z,7Z,10Z,12E,16Z,19Z)-docosahexaenoate + NAD(+) = 14-oxo-(4Z,7Z,10Z,12E,16Z,19Z)-docosahexaenoate + NADH + H(+). It carries out the reaction resolvin E1 + NAD(+) = 18-oxo-resolvin E1 + NADH + H(+). It catalyses the reaction resolvin D1 + NAD(+) = 8-oxoresolvin D1 + NADH + H(+). The enzyme catalyses resolvin D1 + NAD(+) = 17-oxoresolvin D1 + NADH + H(+). The catalysed reaction is resolvin D2 + NAD(+) = 7-oxoresolvin D2 + NADH + H(+). It carries out the reaction resolvin D2 + NAD(+) = 16-oxoresolvin D2 + NADH + H(+). Functionally, catalyzes the NAD-dependent dehydrogenation (oxidation) of a broad array of hydroxylated polyunsaturated fatty acids (mainly eicosanoids and docosanoids, including prostaglandins, lipoxins and resolvins), yielding their corresponding keto (oxo) metabolites. Decreases the levels of the pro-proliferative prostaglandins such as prostaglandin E2 (whose activity is increased in cancer because of an increase in the expression of cyclooxygenase 2) and generates oxo-fatty acid products that can profoundly influence cell function by abrogating pro-inflammatory cytokine expression. Converts resolvins E1, D1 and D2 to their oxo products, which represents a mode of resolvin inactivation. Resolvin E1 plays important roles during the resolution phase of acute inflammation, while resolvins D1 and D2 have a unique role in obesity-induced adipose inflammation. The polypeptide is 15-hydroxyprostaglandin dehydrogenase [NAD(+)] (HPGD) (Bos taurus (Bovine)).